Here is an 82-residue protein sequence, read N- to C-terminus: Small ribosomal subunit protein uS17 (82 aa).

This sequence belongs to the universal ribosomal protein uS17 family. As to quaternary structure, part of the 30S ribosomal subunit.

Its function is as follows. One of the primary rRNA binding proteins, it binds specifically to the 5'-end of 16S ribosomal RNA. This Nitrobacter winogradskyi (strain ATCC 25391 / DSM 10237 / CIP 104748 / NCIMB 11846 / Nb-255) protein is Small ribosomal subunit protein uS17.